A 135-amino-acid chain; its full sequence is Methylglyoxal synthase (135 aa).

Residues 1–135 form the MGS-like domain; the sequence is MPKRRRIALI…AQPDPKEIHA (135 aa). Residues H12, K16, 38-41, and 58-59 each bind substrate; these read TGTT and SG. The Proton donor/acceptor role is filled by D64. Residue H91 participates in substrate binding.

Belongs to the methylglyoxal synthase family.

It catalyses the reaction dihydroxyacetone phosphate = methylglyoxal + phosphate. In terms of biological role, catalyzes the formation of methylglyoxal from dihydroxyacetone phosphate. The sequence is that of Methylglyoxal synthase from Ralstonia nicotianae (strain ATCC BAA-1114 / GMI1000) (Ralstonia solanacearum).